Reading from the N-terminus, the 316-residue chain is Methionyl-tRNA formyltransferase (316 aa).

Position 112–115 (112–115 (SLLP)) interacts with (6S)-5,6,7,8-tetrahydrofolate.

This sequence belongs to the Fmt family.

The catalysed reaction is L-methionyl-tRNA(fMet) + (6R)-10-formyltetrahydrofolate = N-formyl-L-methionyl-tRNA(fMet) + (6S)-5,6,7,8-tetrahydrofolate + H(+). Attaches a formyl group to the free amino group of methionyl-tRNA(fMet). The formyl group appears to play a dual role in the initiator identity of N-formylmethionyl-tRNA by promoting its recognition by IF2 and preventing the misappropriation of this tRNA by the elongation apparatus. The sequence is that of Methionyl-tRNA formyltransferase from Haemophilus ducreyi (strain 35000HP / ATCC 700724).